A 468-amino-acid polypeptide reads, in one-letter code: UDP-N-acetylmuramate--L-alanine ligase (468 aa).

Residue 107–113 (GTHGKTT) participates in ATP binding.

Belongs to the MurCDEF family.

It is found in the cytoplasm. It carries out the reaction UDP-N-acetyl-alpha-D-muramate + L-alanine + ATP = UDP-N-acetyl-alpha-D-muramoyl-L-alanine + ADP + phosphate + H(+). It functions in the pathway cell wall biogenesis; peptidoglycan biosynthesis. Cell wall formation. The protein is UDP-N-acetylmuramate--L-alanine ligase of Roseiflexus sp. (strain RS-1).